A 1185-amino-acid polypeptide reads, in one-letter code: Chromosome partition protein Smc (1185 aa).

An ATP-binding site is contributed by 32–39 (PNGSGKSN). A coiled-coil region spans residues 228 to 503 (SRLVKKLTIA…LQAVQERYTN (276 aa)). The segment at 300 to 323 (TQGQQGVDAERRQNQQSEQERLTA) is disordered. The segment covering 307-320 (DAERRQNQQSEQER) has biased composition (basic and acidic residues). Positions 519-637 (SGVAGAVSEL…VDTLDHAMAI (119 aa)) constitute an SMC hinge domain. Coiled-coil stretches lie at residues 675 to 928 (QQQQ…RRLE) and 989 to 1025 (AIDEFERVKERFDFLNNQASDLTEAKEHLLQTMADLD).

The protein belongs to the SMC family. In terms of assembly, homodimer.

The protein localises to the cytoplasm. In terms of biological role, required for chromosome condensation and partitioning. The protein is Chromosome partition protein Smc of Lactiplantibacillus plantarum (strain ATCC BAA-793 / NCIMB 8826 / WCFS1) (Lactobacillus plantarum).